We begin with the raw amino-acid sequence, 459 residues long: MTTRNTIILAAGKGTRMKSKLYKVLHKVCGKAMVDHVLTQVEKTDMSKIVTVVGYGADEVKSTLGDRTQYALQAEQLGTGHAVLQTEPMLKDEAGTTLIVSGDTPLFRAETFEDLFAYHEAKHAAATILTSMAPDPTGYGRIVRNNIGIVEKIVEQKDANSEEQEIHEINTGVYVFDNQKLFKALHETSNDNAQGEYYLTDVIEILKQQGDIVAAYQMANFDESMGVNDRVALSAATKIMRDRINEAHMRDGVTLIDPATTYIDAGVKIGADTIIEPGVLLKGNTVIGEDCYIGAHSELRNAVLADHVTVTSSLLEDSDMASGSNIGPNSHLRPESHIGPKVHLGNFVEVKKATIGEGTKVGHLTYVGNAKLGRNINVGCGVVFVNYDGKNKHETVVGDDAFIGSNSNLVAPLDVADHSFIAAGSTITDAVNRYDMAIARQRQTNKPNYYQKLPYRGED.

Positions 1 to 230 are pyrophosphorylase; sequence MTTRNTIILA…FDESMGVNDR (230 aa). UDP-N-acetyl-alpha-D-glucosamine contacts are provided by residues 9–12, Lys-23, Gln-73, 78–79, 101–103, Gly-140, Glu-155, Asn-170, and Asn-228; these read LAAG, GT, and SGD. Residue Asp-103 participates in Mg(2+) binding. Residue Asn-228 participates in Mg(2+) binding. The segment at 231-251 is linker; sequence VALSAATKIMRDRINEAHMRD. The N-acetyltransferase stretch occupies residues 252–459; the sequence is GVTLIDPATT…YQKLPYRGED (208 aa). Arg-333 and Lys-351 together coordinate UDP-N-acetyl-alpha-D-glucosamine. Catalysis depends on His-363, which acts as the Proton acceptor. The UDP-N-acetyl-alpha-D-glucosamine site is built by Tyr-366 and Asn-377. Acetyl-CoA contacts are provided by residues 386-387, Ser-405, Ala-423, and Arg-440; that span reads NY.

In the N-terminal section; belongs to the N-acetylglucosamine-1-phosphate uridyltransferase family. The protein in the C-terminal section; belongs to the transferase hexapeptide repeat family. In terms of assembly, homotrimer. Requires Mg(2+) as cofactor.

The protein localises to the cytoplasm. The enzyme catalyses alpha-D-glucosamine 1-phosphate + acetyl-CoA = N-acetyl-alpha-D-glucosamine 1-phosphate + CoA + H(+). The catalysed reaction is N-acetyl-alpha-D-glucosamine 1-phosphate + UTP + H(+) = UDP-N-acetyl-alpha-D-glucosamine + diphosphate. Its pathway is nucleotide-sugar biosynthesis; UDP-N-acetyl-alpha-D-glucosamine biosynthesis; N-acetyl-alpha-D-glucosamine 1-phosphate from alpha-D-glucosamine 6-phosphate (route II): step 2/2. The protein operates within nucleotide-sugar biosynthesis; UDP-N-acetyl-alpha-D-glucosamine biosynthesis; UDP-N-acetyl-alpha-D-glucosamine from N-acetyl-alpha-D-glucosamine 1-phosphate: step 1/1. It functions in the pathway bacterial outer membrane biogenesis; LPS lipid A biosynthesis. In terms of biological role, catalyzes the last two sequential reactions in the de novo biosynthetic pathway for UDP-N-acetylglucosamine (UDP-GlcNAc). The C-terminal domain catalyzes the transfer of acetyl group from acetyl coenzyme A to glucosamine-1-phosphate (GlcN-1-P) to produce N-acetylglucosamine-1-phosphate (GlcNAc-1-P), which is converted into UDP-GlcNAc by the transfer of uridine 5-monophosphate (from uridine 5-triphosphate), a reaction catalyzed by the N-terminal domain. The protein is Bifunctional protein GlmU of Levilactobacillus brevis (strain ATCC 367 / BCRC 12310 / CIP 105137 / JCM 1170 / LMG 11437 / NCIMB 947 / NCTC 947) (Lactobacillus brevis).